A 210-amino-acid chain; its full sequence is High mobility group protein B2 (210 aa).

K3 is modified (N6-acetyllysine). Positions 9–79 form a DNA-binding region, HMG box 1; sequence PRGKMSSYAF…RYDREMKNYV (71 aa). C23 is modified (cysteine sulfonic acid (-SO3H); alternate). Cysteines 23 and 45 form a disulfide. K30 is modified (N6-acetyllysine). S35 carries the post-translational modification Phosphoserine. K43 carries the post-translational modification N6-acetyllysine. C45 carries the post-translational modification Cysteine sulfonic acid (-SO3H); alternate. Residues 51-76 show a composition bias toward basic and acidic residues; it reads TMSAKEKSKFEDLAKSDKARYDREMK. The tract at residues 51–102 is disordered; that stretch reads TMSAKEKSKFEDLAKSDKARYDREMKNYVPPKGDKKGKKKDPNAPKRPPSAF. Residue K90 is modified to N6-acetyllysine. Residues 95–163 constitute a DNA-binding region (HMG box 2); it reads PKRPPSAFFL…KYEKDIAAYR (69 aa). At S100 the chain carries Phosphoserine. At C106 the chain carries Cysteine sulfonic acid (-SO3H). Residues K114 and K141 each carry the N6-acetyllysine modification. The span at 162-172 shows a compositional bias: basic and acidic residues; that stretch reads YRAKGKSEVGK. The disordered stretch occupies residues 162–210; the sequence is YRAKGKSEVGKKGPGRPTGSKKKNEPEDEEEEEEEEDDEDEEEEDEDEE. Positions 165-180 are required for chemotactic activity; that stretch reads KGKSEVGKKGPGRPTG. The span at 187–210 shows a compositional bias: acidic residues; that stretch reads PEDEEEEEEEEDDEDEEEEDEDEE.

It belongs to the HMGB family. In terms of assembly, interacts with POU2F2, POU2F1 and POU3F1. Component of the RAG complex composed of core components RAG1 and RAG2, and associated component HMGB1 or HMGB2. Component of the SET complex, composed of at least ANP32A, APEX1, HMGB2, NME1, SET and TREX1. Directly interacts with SET. Interacts with LEF1. In terms of processing, reduction/oxidation of cysteine residues Cys-23, Cys-45 and Cys-106 and a possible intramolecular disulfide bond involving Cys-23 and Cys-45 give rise to different redox forms with specific functional activities in various cellular compartments: 1- fully reduced HMGB2 (HMGB2C23hC45hC106h), 2- disulfide HMGB2 (HMGB2C23-C45C106h) and 3- sulfonyl HMGB2 (HMGB2C23soC45soC106so).

The protein localises to the nucleus. It localises to the chromosome. The protein resides in the cytoplasm. Its subcellular location is the secreted. In terms of biological role, multifunctional protein with various roles in different cellular compartments. May act in a redox sensitive manner. In the nucleus is an abundant chromatin-associated non-histone protein involved in transcription, chromatin remodeling and V(D)J recombination and probably other processes. Binds DNA with a preference to non-canonical DNA structures such as single-stranded DNA. Can bent DNA and enhance DNA flexibility by looping thus providing a mechanism to promote activities on various gene promoters by enhancing transcription factor binding and/or bringing distant regulatory sequences into close proximity. Involved in V(D)J recombination by acting as a cofactor of the RAG complex: acts by stimulating cleavage and RAG protein binding at the 23 bp spacer of conserved recombination signal sequences (RSS). Proposed to be involved in the innate immune response to nucleic acids by acting as a cytoplasmic promiscuous immunogenic DNA/RNA sensor which cooperates with subsequent discriminative sensing by specific pattern recognition receptors. In the extracellular compartment acts as a chemokine. Promotes proliferation and migration of endothelial cells implicating AGER/RAGE. Has antimicrobial activity in gastrointestinal epithelial tissues. Involved in inflammatory response to antigenic stimulus coupled with pro-inflammatory activity. May play a role in germ cell differentiation. Involved in modulation of neurogenesis probably by regulation of neural stem proliferation. Involved in articular cartilage surface maintenance implicating LEF1 and the Wnt/beta-catenin pathway. This chain is High mobility group protein B2 (Hmgb2), found in Rattus norvegicus (Rat).